The sequence spans 1013 residues: Adhesion G-protein coupled receptor G2 (1013 aa).

An N-terminal signal peptide occupies residues 1–37; the sequence is MLFSGGQYSPVGRPEEVLLIYKIFLVIICFHAILVTS. Residues 38-623 are Extracellular-facing; that stretch reads LKENAGNSSL…TSLPPSQMMA (586 aa). Asparagine 44, asparagine 78, asparagine 92, asparagine 104, asparagine 128, asparagine 137, asparagine 155, asparagine 179, asparagine 187, asparagine 366, asparagine 431, asparagine 452, asparagine 457, asparagine 524, asparagine 538, asparagine 543, asparagine 547, and asparagine 593 each carry an N-linked (GlcNAc...) asparagine glycan. The region spanning 457-615 is the GAIN-B domain; it reads NTTTFAAQDP…GILLDLSRTS (159 aa). Intrachain disulfides connect cysteine 566-cysteine 597 and cysteine 585-cysteine 599. Residues 566–615 are GPS; that stretch reads CVFWDLNRNGGRGGWSSDGCSVKEKRMNETICTCSHLTSFGILLDLSRTS. A stachel region spans residues 604–615; it reads SFGILLDLSRTS. A helical transmembrane segment spans residues 624–644; sequence LTFITYIGCGLSSIFLSVTLV. Residues 645–663 lie on the Cytoplasmic side of the membrane; that stretch reads TYIAFEKIRRDYPSKILIQ. A helical membrane pass occupies residues 664–684; it reads LCAALLLLNLVFLLDSWIALY. Topologically, residues 685 to 688 are extracellular; it reads NARG. The chain crosses the membrane as a helical span at residues 689-709; the sequence is FCISVAVFLHYFLLVSFTWMG. A disulfide bridge links cysteine 690 with cysteine 774. The Cytoplasmic portion of the chain corresponds to 710-733; that stretch reads LEAFHMYLALVKVFNTYIRKYILK. The helical transmembrane segment at 734–754 threads the bilayer; it reads FCIVGWGIPAVVVSIVLTISP. Topologically, residues 755–785 are extracellular; it reads DNYGIGSYGKFPNGTPDDFCWINSSVVFYIT. Residue asparagine 777 is glycosylated (N-linked (GlcNAc...) asparagine). A helical transmembrane segment spans residues 786 to 806; the sequence is VVGYFCVIFLLNVSMFIVVLV. Over 807-830 the chain is Cytoplasmic; sequence QLCRIKKKKQLGAQRKTSIQDLRS. Residues 831–851 traverse the membrane as a helical segment; sequence IAGLTFLLGITWGFAFFAWGP. Residues 852 to 853 lie on the Extracellular side of the membrane; the sequence is VN. N-linked (GlcNAc...) asparagine glycosylation occurs at asparagine 853. A helical membrane pass occupies residues 854 to 874; it reads LTFMYLFAIFNTLQGFFIFIF. Asparagine 864 is a 3beta-hydroxyandrost-5-en-17-one binding site. Residues 875–1013 are Cytoplasmic-facing; it reads YCAAKENVRK…RGSLHFIEQM (139 aa). The residue at position 1006 (serine 1006) is a Phosphoserine.

Belongs to the G-protein coupled receptor 2 family. Adhesion G-protein coupled receptor (ADGR) subfamily. In terms of assembly, heterodimer of 2 chains generated by proteolytic processing; the large extracellular N-terminal fragment and the membrane-bound C-terminal fragment predominantly remain associated and non-covalently linked. Interacts with CFTR. Proteolytically cleaved into 2 subunits, an extracellular subunit and a seven-transmembrane subunit. In terms of processing, highly glycosylated. Epididymis-specific expression (at protein level). Associated with apical membranes of efferent ductule and proximal epididymal duct epithelia.

It is found in the apical cell membrane. With respect to regulation, forms a heterodimer of 2 chains generated by proteolytic processing that remain associated through non-covalent interactions mediated by the GAIN-B domain. In the inactivated receptor, the Stachel sequence (also named stalk) is embedded in the GAIN-B domain, where it adopts a beta-strand conformation. On activation, the Stachel moves into the 7 transmembrane region and adopts a twisted hook-shaped configuration that forms contacts within the receptor, leading to coupling of a G-alpha protein, which activates signaling. The cleaved GAIN-B and N-terminal domains can then dissociate from the rest of the receptor. Deoxycorticosterone (DOC) acts as an antagonist of ADGRG2. In terms of biological role, adhesion G-protein coupled receptor (aGPCR) for steroid hormones, such as dehydroepiandrosterone (DHEA; also named 3beta-hydroxyandrost-5-en-17-one) and androstenedione. Involved in a signal transduction pathway controlling epididymal function and male fertility. Ligand binding causes a conformation change that triggers signaling via guanine nucleotide-binding proteins (G proteins) and modulates the activity of downstream effectors, such as adenylate cyclase. ADGRG2 is coupled to G(s) G proteins and mediates activation of adenylate cyclase activity. Also able to couple with G(q) G proteins in vitro. May regulate fluid exchange within epididymis. In Rattus norvegicus (Rat), this protein is Adhesion G-protein coupled receptor G2.